Consider the following 108-residue polypeptide: Putative septation protein SpoVG (108 aa).

The protein belongs to the SpoVG family.

Functionally, could be involved in septation. The polypeptide is Putative septation protein SpoVG (Bdellovibrio bacteriovorus (strain ATCC 15356 / DSM 50701 / NCIMB 9529 / HD100)).